The sequence spans 194 residues: Glycerol-3-phosphate acyltransferase 2 (194 aa).

The next 5 membrane-spanning stretches (helical) occupy residues 1-21, 64-84, 112-132, 135-155, and 156-173; these read MWLL…AYVV, VLAV…LAAL, LAMA…VVIF, YISL…IYFH, and RPWP…LVIY.

This sequence belongs to the PlsY family. As to quaternary structure, probably interacts with PlsX.

It localises to the cell membrane. The catalysed reaction is an acyl phosphate + sn-glycerol 3-phosphate = a 1-acyl-sn-glycero-3-phosphate + phosphate. It functions in the pathway lipid metabolism; phospholipid metabolism. Functionally, catalyzes the transfer of an acyl group from acyl-phosphate (acyl-PO(4)) to glycerol-3-phosphate (G3P) to form lysophosphatidic acid (LPA). This enzyme utilizes acyl-phosphate as fatty acyl donor, but not acyl-CoA or acyl-ACP. This is Glycerol-3-phosphate acyltransferase 2 from Moorella thermoacetica (strain ATCC 39073 / JCM 9320).